We begin with the raw amino-acid sequence, 345 residues long: MNTTSLSYRDAGVDIDAGDALVENIKPFAKRTMRPEVLGGIGGFGALVEISKKYKEPVLVSGTDGVGTKLKLAFDWNRHDTVGIDLVAMSVNDILVQGAEPLFFLDYFACGKLDVAQATEVIKGIAAGCEQAGCALTGGETAEMPGMYPAGEYDLAGFAVGVVEKSKVISGRDIVPGDVVLGLASNGVHSNGYSLVRKIIDRAQPELDAPFDGDKTLRDAVIAPTRIYVKPLLKLMETLPVKGMAHITGGGITENTPRVLPDNTVAQIDAASWQLPKLFQWLQREGNVDIQEMYRTFNCGIGMVVVVAPEHAEQALALLREAGETVYRIGQVRERQGGEHQTQIA.

The protein belongs to the AIR synthase family.

Its subcellular location is the cytoplasm. It carries out the reaction 2-formamido-N(1)-(5-O-phospho-beta-D-ribosyl)acetamidine + ATP = 5-amino-1-(5-phospho-beta-D-ribosyl)imidazole + ADP + phosphate + H(+). The protein operates within purine metabolism; IMP biosynthesis via de novo pathway; 5-amino-1-(5-phospho-D-ribosyl)imidazole from N(2)-formyl-N(1)-(5-phospho-D-ribosyl)glycinamide: step 2/2. The polypeptide is Phosphoribosylformylglycinamidine cyclo-ligase (Chromobacterium violaceum (strain ATCC 12472 / DSM 30191 / JCM 1249 / CCUG 213 / NBRC 12614 / NCIMB 9131 / NCTC 9757 / MK)).